The following is a 149-amino-acid chain: MQVILLDKIVHLGNVGDQVNVKSGFARNFLIPQGKAVMATKANIEFFEARRAEFEAKAATELAEAQARAEKIAALESVTIVSKAGEEGRLFGSITTRDIADAVTAAGVEVSKSEVRLSTGPLRTTGDHEVRFQLHGEVFTTLNVVVVAE.

It belongs to the bacterial ribosomal protein bL9 family.

Functionally, binds to the 23S rRNA. This is Large ribosomal subunit protein bL9 from Actinobacillus succinogenes (strain ATCC 55618 / DSM 22257 / CCUG 43843 / 130Z).